We begin with the raw amino-acid sequence, 261 residues long: Putative [LysW]-aminoadipate/[LysW]-glutamate kinase (261 aa).

Residues 35-36 (GG), arginine 62, and asparagine 162 each bind substrate.

Belongs to the acetylglutamate kinase family. LysZ subfamily.

It is found in the cytoplasm. It catalyses the reaction [amino-group carrier protein]-C-terminal-N-(1,4-dicarboxybutan-1-yl)-L-glutamine + ATP = [amino-group carrier protein]-C-terminal-N-(1-carboxy-5-phosphooxy-5-oxopentan-1-yl)-L-glutamine + ADP. It carries out the reaction [amino-group carrier protein]-C-terminal-gamma-(L-glutamyl)-L-glutamate + ATP = [amino-group carrier protein]-C-terminal-gamma-(5-phospho-L-glutamyl)-L-glutamate + ADP. The protein operates within amino-acid biosynthesis; L-lysine biosynthesis via AAA pathway; L-lysine from L-alpha-aminoadipate (Thermus route): step 2/5. Its pathway is amino-acid biosynthesis; L-arginine biosynthesis. Its function is as follows. Involved in both the arginine and lysine biosynthetic pathways. Phosphorylates the LysW-bound precursors glutamate (for arginine biosynthesis), respectively alpha-aminoadipate (for lysine biosynthesis). The polypeptide is Putative [LysW]-aminoadipate/[LysW]-glutamate kinase (Pyrobaculum islandicum (strain DSM 4184 / JCM 9189 / GEO3)).